We begin with the raw amino-acid sequence, 263 residues long: Type III pantothenate kinase (263 aa).

An ATP-binding site is contributed by 14-21 (DIGNTSVN). 115–118 (GADR) lines the substrate pocket. Aspartate 117 functions as the Proton acceptor in the catalytic mechanism. Residue aspartate 137 participates in K(+) binding. Residue threonine 140 participates in ATP binding. Threonine 192 is a binding site for substrate.

This sequence belongs to the type III pantothenate kinase family. In terms of assembly, homodimer. Requires NH4(+) as cofactor. K(+) serves as cofactor.

It localises to the cytoplasm. It catalyses the reaction (R)-pantothenate + ATP = (R)-4'-phosphopantothenate + ADP + H(+). It participates in cofactor biosynthesis; coenzyme A biosynthesis; CoA from (R)-pantothenate: step 1/5. Its function is as follows. Catalyzes the phosphorylation of pantothenate (Pan), the first step in CoA biosynthesis. The sequence is that of Type III pantothenate kinase from Dehalococcoides mccartyi (strain ATCC BAA-2100 / JCM 16839 / KCTC 5957 / BAV1).